We begin with the raw amino-acid sequence, 313 residues long: CRISPR-associated endonuclease Cas1 1 (313 aa).

Residues E144, H211, and D224 each coordinate Mn(2+). The disordered stretch occupies residues 288–313 (PPLDAPEAVDPVIPPEEPSGDDGHRG).

Belongs to the CRISPR-associated endonuclease Cas1 family. Homodimer, forms a heterotetramer with a Cas2 homodimer. Mg(2+) serves as cofactor. The cofactor is Mn(2+).

Functionally, CRISPR (clustered regularly interspaced short palindromic repeat), is an adaptive immune system that provides protection against mobile genetic elements (viruses, transposable elements and conjugative plasmids). CRISPR clusters contain spacers, sequences complementary to antecedent mobile elements, and target invading nucleic acids. CRISPR clusters are transcribed and processed into CRISPR RNA (crRNA). Acts as a dsDNA endonuclease. Involved in the integration of spacer DNA into the CRISPR cassette. This Rhodospirillum rubrum (strain ATCC 11170 / ATH 1.1.1 / DSM 467 / LMG 4362 / NCIMB 8255 / S1) protein is CRISPR-associated endonuclease Cas1 1.